A 330-amino-acid polypeptide reads, in one-letter code: Putative acetyltransferase ORF330 (330 aa).

10 consecutive transmembrane segments (helical) span residues 29-49, 50-70, 90-110, 118-138, 163-183, 190-210, 225-245, 252-272, 273-293, and 297-317; these read GFAS…LPLS, IFRP…FLLL, IYPL…YYFH, LFLH…SYVF, FLLA…IVTL, LLYF…IAYI, ISFL…NEFL, VVVY…PPKV, LSKV…WHLL, and LLGV…EFPL.

Its subcellular location is the host membrane. The chain is Putative acetyltransferase ORF330 from Acidianus convivator (ATV).